The sequence spans 530 residues: Phosphoenolpyruvate carboxykinase (ATP) (530 aa).

Arg-58, Tyr-195, and Lys-201 together coordinate substrate. ATP-binding positions include Lys-201, His-220, and 236 to 244 (GLSGTGKTT). Mn(2+) contacts are provided by Lys-201 and His-220. Asp-257 is a Mn(2+) binding site. ATP contacts are provided by residues Glu-285, Arg-321, 440-441 (RI), and Thr-446. Arg-321 lines the substrate pocket.

This sequence belongs to the phosphoenolpyruvate carboxykinase (ATP) family. Mn(2+) serves as cofactor.

The protein resides in the cytoplasm. It catalyses the reaction oxaloacetate + ATP = phosphoenolpyruvate + ADP + CO2. It participates in carbohydrate biosynthesis; gluconeogenesis. Involved in the gluconeogenesis. Catalyzes the conversion of oxaloacetate (OAA) to phosphoenolpyruvate (PEP) through direct phosphoryl transfer between the nucleoside triphosphate and OAA. This is Phosphoenolpyruvate carboxykinase (ATP) from Staphylococcus epidermidis (strain ATCC 12228 / FDA PCI 1200).